We begin with the raw amino-acid sequence, 128 residues long: Leucine-rich single-pass membrane protein 1 (128 aa).

The residue at position 24 (Ser-24) is a Phosphoserine. Residues Val-65 to Ile-85 traverse the membrane as a helical segment. Residues Gln-87–Lys-111 are a coiled coil.

It localises to the membrane. The protein is Leucine-rich single-pass membrane protein 1 (LSMEM1) of Bos taurus (Bovine).